Here is a 745-residue protein sequence, read N- to C-terminus: Receptor-type adenylate cyclase (745 aa).

The Extracellular segment spans residues 1 to 341; the sequence is GELGQTDRFF…NEGALTRAQL (341 aa). Residues Asn-15, Asn-50, Asn-189, and Asn-312 are each glycosylated (N-linked (GlcNAc...) asparagine). The helical transmembrane segment at 342 to 362 threads the bilayer; the sequence is IGVVVGTIFAVLLLLALGIVL. Over 363–745 the chain is Cytoplasmic; the sequence is CVALRNTRDN…GSDEVARTCV (383 aa). One can recognise a Guanylate cyclase domain in the interval 384 to 538; it reads TLIFTDIESS…RTPNLAARTE (155 aa). Positions 389 and 432 each coordinate Mg(2+).

It belongs to the adenylyl cyclase class-3 family. Requires Mg(2+) as cofactor.

It is found in the cell membrane. It catalyses the reaction ATP = 3',5'-cyclic AMP + diphosphate. Its function is as follows. Could act as a receptor for an unknown ligand. This Trypanosoma congolense protein is Receptor-type adenylate cyclase.